A 154-amino-acid chain; its full sequence is Large ribosomal subunit protein uL13 (154 aa).

This sequence belongs to the universal ribosomal protein uL13 family. In terms of assembly, part of the 50S ribosomal subunit.

Functionally, this protein is one of the early assembly proteins of the 50S ribosomal subunit, although it is not seen to bind rRNA by itself. It is important during the early stages of 50S assembly. The chain is Large ribosomal subunit protein uL13 from Mesorhizobium japonicum (strain LMG 29417 / CECT 9101 / MAFF 303099) (Mesorhizobium loti (strain MAFF 303099)).